The sequence spans 1019 residues: MKLLKPTWVNHNGKPIFSVDIHPDGTKFATGGQGQDSGKVVIWNMAPVLKEEDEKNENIPKMLCQMDNHLACVNCVRWSNNGVYLASGGDDKLIMVWKRAAYIGPSTVFGSSSKLTNVEQWRCVSILRSHSGDVMDVAWSPHDAWLASCSVDNTVVIWNAVKFPEILATLKGHSGLVKGLTWDPVGKYIASQADDRSLKVWRTMDWQLETSITKPFDECGGTTHVLRLSWSPDGHYLVSAHAMNNSGPTAQIIERDGWKTNMDFVGHRKAVTVVKFNPKIFKKKQKNGSSTKSSCPYCCCAVGSKDRSLSVWLTCLKRPLVVIHELFDKSIMDISWTLNGLGILVCSMDGSVAFLDFSQDELGDPLSEEEKSNIHQSTYGKSLAIMTEAQLSTTIIENPEMLKYQQRQQQQQAEQKNASIREASGAATTAPKVASMVNGESLEDIRKNLLKKQVETRTADGRRRITPLCIAQLDTGDFSTAFFNSIPISGTLAGSIMSSQNNQQLMSLDSNAANSLNTSKPSAEPTAASIKPTDDAASKDGVNATSVSTAPPASSSSVLTTPSKIEPMKAFDSRFTERSKATSGTAVVTNTNQTVVDRLKDQNLIKDNKPKDILESSSDSEEKIPAAKPLSAPKRKLELEGETVEKKKKGRPRKDSRLVPVTLTVQSPAALASEKDAACISAPALALKLPTPIPQKSFTLQVSSDPSMYLEVENEMTTVGGSKLSRLKCNREGKEWETVLTSRILTAAGSCEIVCVACEKRMLSVFSACGRRLLPPIILNTPISTLHCTGSYIMTLTTAATLSVWDVHKQTVIVRDESLQTILSGSDTTVSQILLTQHGIPVMSMSDGKAYCFNPSLSTWNLVSDKQDSLAQCADFRSSLPSQEAMLCSGPLAVIQGRTSNSGRQAARLFSMPHLVQQETTLAYLENQIAAALMLQSSHEYRHWLLIYARYLVNEGFEYRLRELCKDLLGPVHYSRGSQWESTVMGLRKRELLKELLPVIGQNLFQRLFTEYQEQLDIL.

WD repeat units lie at residues 11–53 (HNGK…KEED), 68–107 (NHLA…GPST), 129–168 (SHSG…EILA), 172–211 (GHSG…LETS), 220–263 (GGTT…TNMD), 266–322 (GHRK…PLVV), and 326–367 (LFDK…DPLS). Positions 23 to 443 (PDGTKFATGG…ASMVNGESLE (421 aa)) are interaction with RBBP4. Low complexity-rich tracts occupy residues 406-415 (QRQQQQQAEQ) and 544-561 (ATSV…VLTT). Disordered stretches follow at residues 406–433 (QRQQ…APKV), 513–561 (ANSL…VLTT), and 599–633 (LKDQ…LSAP). The interaction with HDAC1 stretch occupies residues 444–1019 (DIRKNLLKKQ…TEYQEQLDIL (576 aa)). Residues 599-625 (LKDQNLIKDNKPKDILESSSDSEEKIP) show a composition bias toward basic and acidic residues. The interaction with HDAC2 stretch occupies residues 960–1019 (RLRELCKDLLGPVHYSRGSQWESTVMGLRKRELLKELLPVIGQNLFQRLFTEYQEQLDIL).

Belongs to the WD repeat HIR1 family. In terms of assembly, interacts with ASF1, HDAC1, HDAC2 and RBBP4.

The protein localises to the nucleus. In terms of biological role, cooperates with ASF1A to promote replication-independent chromatin assembly. May regulate the transcription of a variety of genes controlling cell growth. This Gallus gallus (Chicken) protein is Protein HIRA (HIRA).